Consider the following 306-residue polypeptide: Elongation factor Ts (306 aa).

The tract at residues 81–84 (TDFV) is involved in Mg(2+) ion dislocation from EF-Tu.

It belongs to the EF-Ts family.

It is found in the cytoplasm. In terms of biological role, associates with the EF-Tu.GDP complex and induces the exchange of GDP to GTP. It remains bound to the aminoacyl-tRNA.EF-Tu.GTP complex up to the GTP hydrolysis stage on the ribosome. The sequence is that of Elongation factor Ts from Polaromonas naphthalenivorans (strain CJ2).